The sequence spans 326 residues: Putative nickel insertion protein (326 aa).

It belongs to the LarC family.

The protein is Putative nickel insertion protein of Enterococcus faecalis (strain ATCC 700802 / V583).